Consider the following 404-residue polypeptide: WD repeat and SOCS box-containing protein 2 (404 aa).

WD repeat units lie at residues 16-55 (GRPH…LIPW), 81-140 (GSPK…IWEV), 144-183 (LLLL…IWDL), 188-226 (KQIQ…LWSM), 230-268 (TLIR…MWDP), 283-322 (DPAM…IWAL), and 325-362 (KTPI…FWTA). A disordered region spans residues 68–87 (AKSRSSKNETKGRGSPKEKT). One can recognise an SOCS box domain in the interval 356-404 (HVQFWTAPRVLSSLKHLCRKALRSFLTTYQVLALPIPKKMKEFLTYRTF).

It participates in protein modification; protein ubiquitination. Functionally, may be a substrate-recognition component of a SCF-like ECS (Elongin-Cullin-SOCS-box protein) E3 ubiquitin ligase complex which mediates the ubiquitination and subsequent proteasomal degradation of target proteins. The sequence is that of WD repeat and SOCS box-containing protein 2 (WSB2) from Homo sapiens (Human).